The primary structure comprises 247 residues: ATP synthase subunit a, chloroplastic (247 aa).

A run of 5 helical transmembrane segments spans residues 38-58, 95-115, 134-154, 199-219, and 220-240; these read QVLI…LIAV, VPFI…GALL, INTT…AGLS, LVVV…VMFL, and GLFT…AYIG.

It belongs to the ATPase A chain family. F-type ATPases have 2 components, CF(1) - the catalytic core - and CF(0) - the membrane proton channel. CF(1) has five subunits: alpha(3), beta(3), gamma(1), delta(1), epsilon(1). CF(0) has four main subunits: a, b, b' and c.

The protein resides in the plastid. The protein localises to the chloroplast thylakoid membrane. In terms of biological role, key component of the proton channel; it plays a direct role in the translocation of protons across the membrane. The chain is ATP synthase subunit a, chloroplastic from Brachypodium distachyon (Purple false brome).